We begin with the raw amino-acid sequence, 532 residues long: IQ domain-containing protein IQM4 (532 aa).

2 disordered regions span residues 47–67 (SRTN…TGME) and 85–104 (PMNK…RNSL). Residues 56 to 66 (NPQEKSPKTGM) are compositionally biased toward basic and acidic residues. A compositionally biased stretch (acidic residues) spans 85-94 (PMNKEDEEIV). An IQ domain is found at 136–165 (LDAAATTLQKVYKSYRTRRNLADCAVVVEE). Disordered stretches follow at residues 410–443 (SSGY…KERE) and 487–513 (PRIS…PRVR). Residues 487-496 (PRISPGSTRF) are compositionally biased toward polar residues. A compositionally biased stretch (pro residues) spans 499-509 (PYGPIPSPRPS).

Expressed in roots, cauline leaves and flowers, and at lower levels in rosette leaves, stems and siliques.

It is found in the cytoplasm. The protein localises to the nucleus. Its function is as follows. May be involved in biotic and abiotic stress responses. This chain is IQ domain-containing protein IQM4, found in Arabidopsis thaliana (Mouse-ear cress).